A 159-amino-acid chain; its full sequence is ATP synthase subunit b (159 aa).

A helical membrane pass occupies residues 7–27 (VIFMTIINFCILVAILKHFFW).

The protein belongs to the ATPase B chain family. F-type ATPases have 2 components, F(1) - the catalytic core - and F(0) - the membrane proton channel. F(1) has five subunits: alpha(3), beta(3), gamma(1), delta(1), epsilon(1). F(0) has three main subunits: a(1), b(2) and c(10-14). The alpha and beta chains form an alternating ring which encloses part of the gamma chain. F(1) is attached to F(0) by a central stalk formed by the gamma and epsilon chains, while a peripheral stalk is formed by the delta and b chains.

It localises to the cell membrane. In terms of biological role, f(1)F(0) ATP synthase produces ATP from ADP in the presence of a proton or sodium gradient. F-type ATPases consist of two structural domains, F(1) containing the extramembraneous catalytic core and F(0) containing the membrane proton channel, linked together by a central stalk and a peripheral stalk. During catalysis, ATP synthesis in the catalytic domain of F(1) is coupled via a rotary mechanism of the central stalk subunits to proton translocation. Its function is as follows. Component of the F(0) channel, it forms part of the peripheral stalk, linking F(1) to F(0). The sequence is that of ATP synthase subunit b from Clostridium botulinum (strain Alaska E43 / Type E3).